The sequence spans 883 residues: Phosphoenolpyruvate carboxylase (883 aa).

Active-site residues include H138 and K546.

The protein belongs to the PEPCase type 1 family. Mg(2+) serves as cofactor.

It carries out the reaction oxaloacetate + phosphate = phosphoenolpyruvate + hydrogencarbonate. Functionally, forms oxaloacetate, a four-carbon dicarboxylic acid source for the tricarboxylic acid cycle. The chain is Phosphoenolpyruvate carboxylase from Escherichia coli O81 (strain ED1a).